We begin with the raw amino-acid sequence, 183 residues long: 3-hydroxydecanoyl-[acyl-carrier-protein] dehydratase (183 aa).

His77 is an active-site residue.

Belongs to the thioester dehydratase family. FabA subfamily. As to quaternary structure, homodimer.

The protein localises to the cytoplasm. The catalysed reaction is a (3R)-hydroxyacyl-[ACP] = a (2E)-enoyl-[ACP] + H2O. It carries out the reaction (3R)-hydroxydecanoyl-[ACP] = (2E)-decenoyl-[ACP] + H2O. The enzyme catalyses (2E)-decenoyl-[ACP] = (3Z)-decenoyl-[ACP]. The protein operates within lipid metabolism; fatty acid biosynthesis. Functionally, necessary for the introduction of cis unsaturation into fatty acids. Catalyzes the dehydration of (3R)-3-hydroxydecanoyl-ACP to E-(2)-decenoyl-ACP and then its isomerization to Z-(3)-decenoyl-ACP. Can catalyze the dehydratase reaction for beta-hydroxyacyl-ACPs with saturated chain lengths up to 16:0, being most active on intermediate chain length. This Hahella chejuensis (strain KCTC 2396) protein is 3-hydroxydecanoyl-[acyl-carrier-protein] dehydratase.